The primary structure comprises 438 residues: Thymidine phosphorylase (438 aa).

This sequence belongs to the thymidine/pyrimidine-nucleoside phosphorylase family. In terms of assembly, homodimer.

It carries out the reaction thymidine + phosphate = 2-deoxy-alpha-D-ribose 1-phosphate + thymine. It participates in pyrimidine metabolism; dTMP biosynthesis via salvage pathway; dTMP from thymine: step 1/2. In terms of biological role, the enzymes which catalyze the reversible phosphorolysis of pyrimidine nucleosides are involved in the degradation of these compounds and in their utilization as carbon and energy sources, or in the rescue of pyrimidine bases for nucleotide synthesis. The chain is Thymidine phosphorylase from Colwellia psychrerythraea (strain 34H / ATCC BAA-681) (Vibrio psychroerythus).